We begin with the raw amino-acid sequence, 30 residues long: Protein Tat (30 aa).

Residues 1–30 are disordered; that stretch reads PLPTTRGNPTGPKESKKEVESKTETDPFAW. Positions 6–8 match the Cell attachment site motif; it reads RGN. The segment covering 13 to 30 has biased composition (basic and acidic residues); it reads KESKKEVESKTETDPFAW.

This sequence belongs to the lentiviruses Tat family. Interacts with host CCNT1. Associates with the P-TEFb complex composed at least of Tat, P-TEFb (CDK9 and CCNT1), TAR RNA, RNA Pol II. Recruits the HATs CREBBP, TAF1/TFIID, EP300, PCAF and GCN5L2. Interacts with host KAT5/Tip60; this interaction targets the latter to degradation. Interacts with the host deacetylase SIRT1. Interacts with host capping enzyme RNGTT; this interaction stimulates RNGTT. Binds to host KDR, and to the host integrins ITGAV/ITGB3 and ITGA5/ITGB1. Interacts with host KPNB1/importin beta-1 without previous binding to KPNA1/importin alpha-1. Interacts with EIF2AK2. Interacts with host nucleosome assembly protein NAP1L1; this interaction may be required for the transport of Tat within the nucleus, since the two proteins interact at the nuclear rim. Interacts with host C1QBP/SF2P32; this interaction involves lysine-acetylated Tat. Interacts with the host chemokine receptors CCR2, CCR3 and CXCR4. Interacts with host DPP4/CD26; this interaction may trigger an anti-proliferative effect. Interacts with host LDLR. Interacts with the host extracellular matrix metalloproteinase MMP1. Interacts with host PRMT6; this interaction mediates Tat's methylation. Interacts with, and is ubiquitinated by MDM2/Hdm2. Interacts with host PSMC3 and HTATIP2. Interacts with STAB1; this interaction may overcome SATB1-mediated repression of IL2 and IL2RA (interleukin) in T cells by binding to the same domain than HDAC1. Interacts (when acetylated on Lys-50 and Lys-51) with human CDK13, thereby increasing HIV-1 mRNA splicing and promoting the production of the doubly spliced HIV-1 protein Nef. In terms of processing, acetylation by EP300, CREBBP, GCN5L2/GCN5 and PCAF regulates the transactivation activity of Tat. EP300-mediated acetylation of Lys-50 promotes dissociation of Tat from the TAR RNA through the competitive binding to PCAF's bromodomain. In addition, the non-acetylated Tat's N-terminus can also interact with PCAF. PCAF-mediated acetylation of Lys-28 enhances Tat's binding to CCNT1. Lys-50 is deacetylated by SIRT1. Phosphorylated by EIF2AK2 on serine and threonine residues adjacent to the basic region important for TAR RNA binding and function. Phosphorylation of Tat by EIF2AK2 is dependent on the prior activation of EIF2AK2 by dsRNA. Post-translationally, asymmetrical arginine methylation by host PRMT6 seems to diminish the transactivation capacity of Tat and affects the interaction with host CCNT1. In terms of processing, polyubiquitination by MDM2 does not target Tat to degradation, but activates its transactivation function and fosters interaction with CCNT1 and TAR RNA.

It is found in the host nucleus. Its subcellular location is the host nucleolus. The protein resides in the host cytoplasm. It localises to the secreted. In terms of biological role, transcriptional activator that increases RNA Pol II processivity, thereby increasing the level of full-length viral transcripts. Recognizes a hairpin structure at the 5'-LTR of the nascent viral mRNAs referred to as the transactivation responsive RNA element (TAR) and recruits the cyclin T1-CDK9 complex (P-TEFb complex) that will in turn hyperphosphorylate the RNA polymerase II to allow efficient elongation. The CDK9 component of P-TEFb and other Tat-activated kinases hyperphosphorylate the C-terminus of RNA Pol II that becomes stabilized and much more processive. Other factors such as HTATSF1/Tat-SF1, SUPT5H/SPT5, and HTATIP2 are also important for Tat's function. Besides its effect on RNA Pol II processivity, Tat induces chromatin remodeling of proviral genes by recruiting the histone acetyltransferases (HATs) CREBBP, EP300 and PCAF to the chromatin. This also contributes to the increase in proviral transcription rate, especially when the provirus integrates in transcriptionally silent region of the host genome. To ensure maximal activation of the LTR, Tat mediates nuclear translocation of NF-kappa-B by interacting with host RELA. Through its interaction with host TBP, Tat may also modulate transcription initiation. Tat can reactivate a latently infected cell by penetrating in it and transactivating its LTR promoter. In the cytoplasm, Tat is thought to act as a translational activator of HIV-1 mRNAs. Functionally, extracellular circulating Tat can be endocytosed by surrounding uninfected cells via the binding to several surface receptors such as CD26, CXCR4, heparan sulfate proteoglycans (HSPG) or LDLR. Neurons are rarely infected, but they internalize Tat via their LDLR. Endosomal low pH allows Tat to cross the endosome membrane to enter the cytosol and eventually further translocate into the nucleus, thereby inducing severe cell dysfunctions ranging from cell activation to cell death. Through its interaction with nuclear HATs, Tat is potentially able to control the acetylation-dependent cellular gene expression. Tat seems to inhibit the HAT activity of KAT5/Tip60 and TAF1, and consequently modify the expression of specific cellular genes. Modulates the expression of many cellular genes involved in cell survival, proliferation or in coding for cytokines (such as IL10) or cytokine receptors. May be involved in the derepression of host interleukin IL2 expression. Mediates the activation of cyclin-dependent kinases and dysregulation of microtubule network. Tat plays a role in T-cell and neurons apoptosis. Tat induced neurotoxicity and apoptosis probably contribute to neuroAIDS. Host extracellular matrix metalloproteinase MMP1 cleaves Tat and decreases Tat's mediated neurotoxicity. Circulating Tat also acts as a chemokine-like and/or growth factor-like molecule that binds to specific receptors on the surface of the cells, affecting many cellular pathways. In the vascular system, Tat binds to ITGAV/ITGB3 and ITGA5/ITGB1 integrins dimers at the surface of endothelial cells and competes with bFGF for heparin-binding sites, leading to an excess of soluble bFGF. Binds to KDR/VEGFR-2. All these Tat-mediated effects enhance angiogenesis in Kaposi's sarcoma lesions. The sequence is that of Protein Tat from Human immunodeficiency virus type 1 group M subtype A (isolate Z321) (HIV-1).